Here is a 1124-residue protein sequence, read N- to C-terminus: Phytochrome A1 (1124 aa).

Residues 1–14 (MSSSRPSQSSTTSA) are compositionally biased toward low complexity. Positions 1 to 20 (MSSSRPSQSSTTSARSKHSA) are disordered. Residues 218–401 (SMERLCDTMV…VFAIHVNKEL (184 aa)) enclose the GAF domain. Cys-323 provides a ligand contact to phytochromobilin. A PAS 1 domain is found at 617–687 (VTAEMVRLIE…KMLELALQGK (71 aa)). The 57-residue stretch at 690–746 (RNVEFEIKTHGPSGDSSPISLIVNACASRDVGDSVVGVCFIAQDITGQKNIMDKFTR) folds into the PAC domain. The 75-residue stretch at 747 to 821 (IEGDYRAIIQ…KNQEAFVNFG (75 aa)) folds into the PAS 2 domain. In terms of domain architecture, Histidine kinase spans 901 to 1118 (YIRRQIRNPL…TFIISVELAV (218 aa)).

This sequence belongs to the phytochrome family. As to quaternary structure, homodimer. Post-translationally, contains one covalently linked phytochromobilin chromophore.

Functionally, regulatory photoreceptor which exists in two forms that are reversibly interconvertible by light: the Pr form that absorbs maximally in the red region of the spectrum and the Pfr form that absorbs maximally in the far-red region. Photoconversion of Pr to Pfr induces an array of morphogenic responses, whereas reconversion of Pfr to Pr cancels the induction of those responses. Pfr controls the expression of a number of nuclear genes including those encoding the small subunit of ribulose-bisphosphate carboxylase, chlorophyll A/B binding protein, protochlorophyllide reductase, rRNA, etc. It also controls the expression of its own gene(s) in a negative feedback fashion. The sequence is that of Phytochrome A1 (PHYA1) from Nicotiana tabacum (Common tobacco).